Consider the following 295-residue polypeptide: Bis(5'-nucleosyl)-tetraphosphatase, symmetrical (295 aa).

Residues 271 to 295 (LSIEHPRHTHTPRRKAKKRHKRSPK) form a disordered region. Positions 277 to 295 (RHTHTPRRKAKKRHKRSPK) are enriched in basic residues.

This sequence belongs to the Ap4A hydrolase family.

The catalysed reaction is P(1),P(4)-bis(5'-adenosyl) tetraphosphate + H2O = 2 ADP + 2 H(+). Its function is as follows. Hydrolyzes diadenosine 5',5'''-P1,P4-tetraphosphate to yield ADP. The protein is Bis(5'-nucleosyl)-tetraphosphatase, symmetrical of Xylella fastidiosa (strain M23).